The primary structure comprises 363 residues: GTPase Obg (363 aa).

Positions 1–159 constitute an Obg domain; that stretch reads MKFVDEAFID…KSLKLELKVL (159 aa). The region spanning 160–341 is the OBG-type G domain; sequence ADVGLLGRPN…LVHAIFGHVQ (182 aa). Residues 166 to 173, 191 to 195, 213 to 216, 291 to 294, and 322 to 324 each bind GTP; these read GRPNAGKS, FTTLH, DIPG, NKLD, and SAL. Positions 173 and 193 each coordinate Mg(2+). The tract at residues 343–363 is disordered; that stretch reads GQRMDNEPPPLDPRFASAGPA.

The protein belongs to the TRAFAC class OBG-HflX-like GTPase superfamily. OBG GTPase family. Monomer. Requires Mg(2+) as cofactor.

It localises to the cytoplasm. Its function is as follows. An essential GTPase which binds GTP, GDP and possibly (p)ppGpp with moderate affinity, with high nucleotide exchange rates and a fairly low GTP hydrolysis rate. Plays a role in control of the cell cycle, stress response, ribosome biogenesis and in those bacteria that undergo differentiation, in morphogenesis control. In Verminephrobacter eiseniae (strain EF01-2), this protein is GTPase Obg.